The following is a 218-amino-acid chain: uncharacterized protein (218 aa).

The tract at residues 1–67 is disordered; sequence MARITNMGKR…KKKRSEYRRL (67 aa). Residues 29 to 39 are compositionally biased toward low complexity; it reads NSSNTNEESSS. Positions 40 to 49 are enriched in polar residues; the sequence is QDNMKASFGS. Residues 58-67 show a composition bias toward basic residues; the sequence is KKKRSEYRRL. CCHC-type zinc fingers lie at residues 77–94, 100–117, and 124–141; these read KFCF…DCPE, SICF…ACSK, and AKCF…QCEQ. A CCHC-type 4; atypical zinc finger spans residues 152-168; it reads CCKFCSSVHHLAKDCDQ.

This is an uncharacterized protein from Schizosaccharomyces pombe (strain 972 / ATCC 24843) (Fission yeast).